Reading from the N-terminus, the 282-residue chain is Putative sugar uptake protein lp_2594 (282 aa).

10 consecutive transmembrane segments (helical) span residues 2-21 (IFLI…LLVG), 31-48 (MFGM…FWLF), 53-75 (VTIS…IGQL), 90-112 (MPIS…FGEW), 119-136 (ILGL…ALSA), 146-163 (FSCY…WIYS), 176-194 (LFLP…WAIY), 209-226 (TLPG…ILSA), 233-252 (NAYI…GLFF), and 262-281 (IVSV…TTAL).

Belongs to the GRP transporter (TC 2.A.7.5) family.

The protein resides in the cell membrane. The sequence is that of Putative sugar uptake protein lp_2594 from Lactiplantibacillus plantarum (strain ATCC BAA-793 / NCIMB 8826 / WCFS1) (Lactobacillus plantarum).